The chain runs to 166 residues: Alanine racemase (166 aa).

Y62 (proton acceptor; specific for L-alanine) is an active-site residue. M110 contributes to the substrate binding site.

Belongs to the alanine racemase family. It depends on pyridoxal 5'-phosphate as a cofactor.

It carries out the reaction L-alanine = D-alanine. The protein operates within amino-acid biosynthesis; D-alanine biosynthesis; D-alanine from L-alanine: step 1/1. Its function is as follows. Catalyzes the interconversion of L-alanine and D-alanine. May also act on other amino acids. The protein is Alanine racemase (alr) of Piscirickettsia salmonis.